The chain runs to 244 residues: LexA repressor (244 aa).

The segment at 1 to 24 is disordered; sequence MSDSSDTTVDGASDGASDGASGAD. The segment covering 10–24 has biased composition (low complexity); the sequence is DGASDGASDGASGAD. The segment at residues 58 to 78 is a DNA-binding region (H-T-H motif); sequence IREIGDAVGLTSTSSVAHQLR. Active-site for autocatalytic cleavage activity residues include Ser168 and Lys205.

It belongs to the peptidase S24 family. In terms of assembly, homodimer.

The catalysed reaction is Hydrolysis of Ala-|-Gly bond in repressor LexA.. Represses a number of genes involved in the response to DNA damage (SOS response), including recA and lexA. In the presence of single-stranded DNA, RecA interacts with LexA causing an autocatalytic cleavage which disrupts the DNA-binding part of LexA, leading to derepression of the SOS regulon and eventually DNA repair. The protein is LexA repressor of Mycobacterium marinum (strain ATCC BAA-535 / M).